An 87-amino-acid chain; its full sequence is MDPPRTPPPSYSEVLMMDVMCGQVSPHVINDTSFVECIPPPQSRPAWNLWNNRRKTFSFLVLTGLAIAMILFIVFVLYVFHVNRQRR.

Position 6 is a phosphothreonine (Thr6). The PPXY motif motif lies at 8–11; that stretch reads PPSY. The helical transmembrane segment at 59 to 79 threads the bilayer; it reads FLVLTGLAIAMILFIVFVLYV.

Interacts with host ITCH; this interaction probably mediates ITCH degradation. Interacts probably with NEDD4.

The protein resides in the membrane. Functionally, down-regulates the TCR/CD3E complex and the transferrin receptor TFRC in host T-cells by blocking them from recycling back to the cell surface. The chain is U24 protein (U24) from Homo sapiens (Human).